A 353-amino-acid polypeptide reads, in one-letter code: Holliday junction branch migration complex subunit RuvB (353 aa).

Residues 4–190 (TDKLQAPRVI…FGIVARLEFY (187 aa)) form a large ATPase domain (RuvB-L) region. ATP contacts are provided by residues leucine 29, arginine 30, glycine 71, lysine 74, threonine 75, threonine 76, 137 to 139 (EDF), arginine 180, tyrosine 190, and arginine 227. Residue threonine 75 coordinates Mg(2+). The tract at residues 191 to 261 (TPHELAYIVG…VADAALLMLD (71 aa)) is small ATPAse domain (RuvB-S). The head domain (RuvB-H) stretch occupies residues 264–353 (HLGLDLMDRK…DESAELFSAP (90 aa)). Positions 319 and 324 each coordinate DNA.

The protein belongs to the RuvB family. In terms of assembly, homohexamer. Forms an RuvA(8)-RuvB(12)-Holliday junction (HJ) complex. HJ DNA is sandwiched between 2 RuvA tetramers; dsDNA enters through RuvA and exits via RuvB. An RuvB hexamer assembles on each DNA strand where it exits the tetramer. Each RuvB hexamer is contacted by two RuvA subunits (via domain III) on 2 adjacent RuvB subunits; this complex drives branch migration. In the full resolvosome a probable DNA-RuvA(4)-RuvB(12)-RuvC(2) complex forms which resolves the HJ.

The protein resides in the cytoplasm. The catalysed reaction is ATP + H2O = ADP + phosphate + H(+). In terms of biological role, the RuvA-RuvB-RuvC complex processes Holliday junction (HJ) DNA during genetic recombination and DNA repair, while the RuvA-RuvB complex plays an important role in the rescue of blocked DNA replication forks via replication fork reversal (RFR). RuvA specifically binds to HJ cruciform DNA, conferring on it an open structure. The RuvB hexamer acts as an ATP-dependent pump, pulling dsDNA into and through the RuvAB complex. RuvB forms 2 homohexamers on either side of HJ DNA bound by 1 or 2 RuvA tetramers; 4 subunits per hexamer contact DNA at a time. Coordinated motions by a converter formed by DNA-disengaged RuvB subunits stimulates ATP hydrolysis and nucleotide exchange. Immobilization of the converter enables RuvB to convert the ATP-contained energy into a lever motion, pulling 2 nucleotides of DNA out of the RuvA tetramer per ATP hydrolyzed, thus driving DNA branch migration. The RuvB motors rotate together with the DNA substrate, which together with the progressing nucleotide cycle form the mechanistic basis for DNA recombination by continuous HJ branch migration. Branch migration allows RuvC to scan DNA until it finds its consensus sequence, where it cleaves and resolves cruciform DNA. In Aromatoleum aromaticum (strain DSM 19018 / LMG 30748 / EbN1) (Azoarcus sp. (strain EbN1)), this protein is Holliday junction branch migration complex subunit RuvB.